The following is a 367-amino-acid chain: D-alanine--D-alanine ligase (367 aa).

The ATP-grasp domain occupies 150–357 (KKLLTAAGLP…YPTLLATMVE (208 aa)). Position 178–233 (178–233 (RERLGLPVFVKPSRGGSSIGVSRVTAWDALPAAIELARRHDPKVIVEAAIPGRELE)) interacts with ATP. Mg(2+) is bound by residues Asp-312, Glu-324, and Asn-326.

The protein belongs to the D-alanine--D-alanine ligase family. Mg(2+) serves as cofactor. It depends on Mn(2+) as a cofactor.

Its subcellular location is the cytoplasm. It catalyses the reaction 2 D-alanine + ATP = D-alanyl-D-alanine + ADP + phosphate + H(+). The protein operates within cell wall biogenesis; peptidoglycan biosynthesis. Its function is as follows. Cell wall formation. This Mycolicibacterium vanbaalenii (strain DSM 7251 / JCM 13017 / BCRC 16820 / KCTC 9966 / NRRL B-24157 / PYR-1) (Mycobacterium vanbaalenii) protein is D-alanine--D-alanine ligase.